Here is a 487-residue protein sequence, read N- to C-terminus: Glycogen synthase (487 aa).

K20 is a binding site for ADP-alpha-D-glucose.

It belongs to the glycosyltransferase 1 family. Bacterial/plant glycogen synthase subfamily.

It catalyses the reaction [(1-&gt;4)-alpha-D-glucosyl](n) + ADP-alpha-D-glucose = [(1-&gt;4)-alpha-D-glucosyl](n+1) + ADP + H(+). Its pathway is glycan biosynthesis; glycogen biosynthesis. In terms of biological role, synthesizes alpha-1,4-glucan chains using ADP-glucose. This is Glycogen synthase from Aliivibrio fischeri (strain MJ11) (Vibrio fischeri).